Reading from the N-terminus, the 74-residue chain is Protein SlyX homolog (74 aa).

A disordered region spans residues 54-74 (QDRNPDAQEPYSLRDEIPPHY).

The protein belongs to the SlyX family.

The protein is Protein SlyX homolog of Neisseria gonorrhoeae (strain ATCC 700825 / FA 1090).